Reading from the N-terminus, the 216-residue chain is Large ribosomal subunit protein bL25 (216 aa).

Residues 184 to 216 are disordered; sequence VPPTSDVEEEEGDEDLEEDVEETAAEEEEGVEE. The span at 189-216 shows a compositional bias: acidic residues; that stretch reads DVEEEEGDEDLEEDVEETAAEEEEGVEE.

It belongs to the bacterial ribosomal protein bL25 family. CTC subfamily. As to quaternary structure, part of the 50S ribosomal subunit; part of the 5S rRNA/L5/L18/L25 subcomplex. Contacts the 5S rRNA. Binds to the 5S rRNA independently of L5 and L18.

In terms of biological role, this is one of the proteins that binds to the 5S RNA in the ribosome where it forms part of the central protuberance. The sequence is that of Large ribosomal subunit protein bL25 from Desulforapulum autotrophicum (strain ATCC 43914 / DSM 3382 / VKM B-1955 / HRM2) (Desulfobacterium autotrophicum).